Reading from the N-terminus, the 182-residue chain is Isopentenyl-diphosphate Delta-isomerase (182 aa).

Mn(2+)-binding residues include His-25 and His-32. The Nudix hydrolase domain occupies 30-164 (RLHLAFSSWL…PWAFSPWMVM (135 aa)). Cys-67 is a catalytic residue. A Mn(2+)-binding site is contributed by His-69. Position 87 (Glu-87) interacts with Mg(2+). Residues Glu-114 and Glu-116 each contribute to the Mn(2+) site. Glu-116 is an active-site residue.

This sequence belongs to the IPP isomerase type 1 family. In terms of assembly, homodimer. It depends on Mg(2+) as a cofactor. Mn(2+) is required as a cofactor.

Its subcellular location is the cytoplasm. It catalyses the reaction isopentenyl diphosphate = dimethylallyl diphosphate. It functions in the pathway isoprenoid biosynthesis; dimethylallyl diphosphate biosynthesis; dimethylallyl diphosphate from isopentenyl diphosphate: step 1/1. In terms of biological role, catalyzes the 1,3-allylic rearrangement of the homoallylic substrate isopentenyl (IPP) to its highly electrophilic allylic isomer, dimethylallyl diphosphate (DMAPP). This chain is Isopentenyl-diphosphate Delta-isomerase, found in Escherichia coli O139:H28 (strain E24377A / ETEC).